A 155-amino-acid chain; its full sequence is Cyanate hydratase (155 aa).

Residues arginine 95, glutamate 98, and serine 121 contribute to the active site.

The protein belongs to the cyanase family.

The enzyme catalyses cyanate + hydrogencarbonate + 3 H(+) = NH4(+) + 2 CO2. Functionally, catalyzes the reaction of cyanate with bicarbonate to produce ammonia and carbon dioxide. The protein is Cyanate hydratase of Pseudomonas syringae pv. syringae (strain B728a).